We begin with the raw amino-acid sequence, 154 residues long: Ribosome maturation factor RimP (154 aa).

It belongs to the RimP family.

It localises to the cytoplasm. Its function is as follows. Required for maturation of 30S ribosomal subunits. This is Ribosome maturation factor RimP from Clostridium perfringens (strain SM101 / Type A).